The chain runs to 318 residues: Dehydrogenase/reductase SDR family member 7C-B (318 aa).

The first 32 residues, 1-32 (MGMSDIMWLDVSWAWLVLTAVLLAAAVFYLYT), serve as a signal peptide directing secretion. NAD(+) is bound at residue 49 to 73 (LITDSLSTVGNECAKLFHAGGARLI). A substrate-binding site is contributed by Ser-186. The active-site Proton acceptor is Tyr-199.

This sequence belongs to the short-chain dehydrogenases/reductases (SDR) family.

It is found in the secreted. Functionally, putative oxidoreductase. The chain is Dehydrogenase/reductase SDR family member 7C-B (dhrs7cb) from Danio rerio (Zebrafish).